Reading from the N-terminus, the 293-residue chain is Aspartate carbamoyltransferase catalytic subunit (293 aa).

Positions 50 and 51 each coordinate carbamoyl phosphate. Lysine 78 lines the L-aspartate pocket. Arginine 100, histidine 127, and glutamine 130 together coordinate carbamoyl phosphate. Arginine 160 and arginine 210 together coordinate L-aspartate. The carbamoyl phosphate site is built by alanine 253 and proline 254.

The protein belongs to the aspartate/ornithine carbamoyltransferase superfamily. ATCase family. In terms of assembly, heterododecamer (2C3:3R2) of six catalytic PyrB chains organized as two trimers (C3), and six regulatory PyrI chains organized as three dimers (R2).

The catalysed reaction is carbamoyl phosphate + L-aspartate = N-carbamoyl-L-aspartate + phosphate + H(+). It functions in the pathway pyrimidine metabolism; UMP biosynthesis via de novo pathway; (S)-dihydroorotate from bicarbonate: step 2/3. Functionally, catalyzes the condensation of carbamoyl phosphate and aspartate to form carbamoyl aspartate and inorganic phosphate, the committed step in the de novo pyrimidine nucleotide biosynthesis pathway. This is Aspartate carbamoyltransferase catalytic subunit from Staphylococcus aureus (strain USA300).